Reading from the N-terminus, the 446-residue chain is tRNA-2-methylthio-N(6)-dimethylallyladenosine synthase (446 aa).

The region spanning 3-120 (KKIYIKTFGC…LPEMLKQRRS (118 aa)) is the MTTase N-terminal domain. Residues C12, C49, C83, C157, C161, and C164 each coordinate [4Fe-4S] cluster. The region spanning 143–375 (KVEGATAFVS…QAVIDQNTRR (233 aa)) is the Radical SAM core domain. A TRAM domain is found at 378–444 (DEMVGSVQRI…AYTLRGEIVV (67 aa)).

Belongs to the methylthiotransferase family. MiaB subfamily. As to quaternary structure, monomer. The cofactor is [4Fe-4S] cluster.

The protein localises to the cytoplasm. The catalysed reaction is N(6)-dimethylallyladenosine(37) in tRNA + (sulfur carrier)-SH + AH2 + 2 S-adenosyl-L-methionine = 2-methylsulfanyl-N(6)-dimethylallyladenosine(37) in tRNA + (sulfur carrier)-H + 5'-deoxyadenosine + L-methionine + A + S-adenosyl-L-homocysteine + 2 H(+). In terms of biological role, catalyzes the methylthiolation of N6-(dimethylallyl)adenosine (i(6)A), leading to the formation of 2-methylthio-N6-(dimethylallyl)adenosine (ms(2)i(6)A) at position 37 in tRNAs that read codons beginning with uridine. In Herminiimonas arsenicoxydans, this protein is tRNA-2-methylthio-N(6)-dimethylallyladenosine synthase.